The primary structure comprises 545 residues: Pseudouridylate synthase RPUSD2 (545 aa).

The tract at residues 48-121 (GLRASHQQNG…PPPKKRRTGV (74 aa)) is disordered. Ser68 is modified (phosphoserine). Residue Asp274 is part of the active site. A Phosphothreonine modification is found at Thr477.

The protein belongs to the pseudouridine synthase RluA family.

It catalyses the reaction a uridine in mRNA = a pseudouridine in mRNA. In terms of biological role, pseudouridine synthase that catalyzes pseudouridylation of mRNAs. This Homo sapiens (Human) protein is Pseudouridylate synthase RPUSD2.